Reading from the N-terminus, the 408-residue chain is FAD-dependent monooxygenase nscC (408 aa).

A signal peptide spans 1-20 (MAPPLPILIIGAGISGLTTA). Residues E34 and A45 each coordinate FAD. N91 and N103 each carry an N-linked (GlcNAc...) asparagine glycan. R119 is a binding site for FAD. N170 and N231 each carry an N-linked (GlcNAc...) asparagine glycan. 2 residues coordinate FAD: D328 and G341.

Belongs to the paxM FAD-dependent monooxygenase family. FAD serves as cofactor.

The protein operates within secondary metabolite biosynthesis. Its function is as follows. FAD-dependent monooxygenase; part of the gene cluster that mediates the biosynthesis of neosartoricin, a prenylated anthracenone that exhibits T-cell antiproliferative activity, suggestive of a physiological role as an immunosuppressive agent. The non-reducing polyketide synthase nscA probably synthesizes and cyclizes the decaketide backbone. The hydrolase nscB then mediates the product release through hydrolysis followed by spontaneous decarboxylation. The prenyltransferase nscD catalyzes the addition of the dimethylallyl group to the aromatic C5. The FAD-dependent monooxygenase nscC is then responsible for the stereospecific hydroxylation at C2. There is no gene encoding O-acetyltransferase in the nsc gene cluster; thus, the last step of 2-O-acetylation leading to neosartoricin may be catalyzed by an unidentified O-acetyltransferase. The protein is FAD-dependent monooxygenase nscC of Neosartorya fischeri (strain ATCC 1020 / DSM 3700 / CBS 544.65 / FGSC A1164 / JCM 1740 / NRRL 181 / WB 181) (Aspergillus fischerianus).